We begin with the raw amino-acid sequence, 449 residues long: Transcription factor AP-2 gamma (449 aa).

Residue Lys-10 forms a Glycyl lysine isopeptide (Lys-Gly) (interchain with G-Cter in SUMO) linkage. The interval 13-58 (EDCEDRHDSSSNGNPRIPHLSSPGQHLYSPAPPLSHTGVAEYQPPP) is disordered. The PPxY motif signature appears at 59–64 (YFPPPY). The segment at 94–130 (AATGSQQQAWPGRQSQEGSSLASHHSRSASLIPHISG) is disordered. Polar residues predominate over residues 95 to 111 (ATGSQQQAWPGRQSQEG). A compositionally biased stretch (low complexity) spans 112-124 (SSLASHHSRSASL). Residue Ser-251 is modified to Phosphoserine; by PKA. The H-S-H (helix-span-helix), dimerization stretch occupies residues 292 to 423 (RRKAAHVTLL…YIKEALIAID (132 aa)). The disordered stretch occupies residues 426–449 (YMNPGDQSPADSSKTMEKMEKHRK). Ser-433 is subject to Phosphoserine. A compositionally biased stretch (basic and acidic residues) spans 439–449 (KTMEKMEKHRK).

This sequence belongs to the AP-2 family. Binds DNA as a dimer. Can form homodimers or heterodimers with other AP-2 family members. Interacts with WWOX. Interacts with UBE2I. Interacts with KCTD1; this interaction represses transcription activation. Interacts with CITED2 (via C-terminus); the interaction stimulates TFAP2B-transcriptional activity. Interacts with CITED4. Interacts with MTA1. In terms of processing, sumoylated on Lys-10; which inhibits transcriptional activity. As to expression, expressed in lung, ovary and testis. Expressed in most squamous epithelia. Also, detected in several exocrine glands including the prostate, the preputial and salivary glands, serous glands of the tongue and ocular harderian glands.

The protein localises to the nucleus. Its function is as follows. Sequence-specific DNA-binding transcription factor that interacts with cellular enhancer elements to regulate transcription of selected genes, and which plays a key role in early embryonic development. AP-2 factors bind to the consensus sequence 5'-GCCNNNGGC-3' and activate genes involved in a large spectrum of important biological functions. TFAP2C plays a key role in early embryonic development by regulating both inner cell mass (ICM) and trophectoderm differentiation. At the 8-cell stage, during morula development, controls expression of cell-polarity genes. Upon trophoblast commitment, binds to late trophectoderm genes in blastocysts together with CDX2, and later to extra-embryonic ectoderm genes together with SOX2. Binds to both closed and open chromatin with other transcription factors. This is Transcription factor AP-2 gamma from Mus musculus (Mouse).